We begin with the raw amino-acid sequence, 228 residues long: 2-C-methyl-D-erythritol 4-phosphate cytidylyltransferase (228 aa).

This sequence belongs to the IspD/TarI cytidylyltransferase family. IspD subfamily.

The enzyme catalyses 2-C-methyl-D-erythritol 4-phosphate + CTP + H(+) = 4-CDP-2-C-methyl-D-erythritol + diphosphate. The protein operates within isoprenoid biosynthesis; isopentenyl diphosphate biosynthesis via DXP pathway; isopentenyl diphosphate from 1-deoxy-D-xylulose 5-phosphate: step 2/6. Catalyzes the formation of 4-diphosphocytidyl-2-C-methyl-D-erythritol from CTP and 2-C-methyl-D-erythritol 4-phosphate (MEP). The sequence is that of 2-C-methyl-D-erythritol 4-phosphate cytidylyltransferase from Actinobacillus pleuropneumoniae serotype 3 (strain JL03).